A 339-amino-acid chain; its full sequence is Anthranilate phosphoribosyltransferase (339 aa).

5-phospho-alpha-D-ribose 1-diphosphate is bound by residues Gly80, 83–84 (GD), Thr88, 90–93 (NIST), 108–116 (KHGNRSVSS), and Ser120. Gly80 is a binding site for anthranilate. Position 92 (Ser92) interacts with Mg(2+). Asn111 contributes to the anthranilate binding site. Arg166 lines the anthranilate pocket. Mg(2+) contacts are provided by Asp225 and Glu226.

Belongs to the anthranilate phosphoribosyltransferase family. In terms of assembly, homodimer. Requires Mg(2+) as cofactor.

The catalysed reaction is N-(5-phospho-beta-D-ribosyl)anthranilate + diphosphate = 5-phospho-alpha-D-ribose 1-diphosphate + anthranilate. It functions in the pathway amino-acid biosynthesis; L-tryptophan biosynthesis; L-tryptophan from chorismate: step 2/5. Functionally, catalyzes the transfer of the phosphoribosyl group of 5-phosphorylribose-1-pyrophosphate (PRPP) to anthranilate to yield N-(5'-phosphoribosyl)-anthranilate (PRA). This is Anthranilate phosphoribosyltransferase from Desulfosudis oleivorans (strain DSM 6200 / JCM 39069 / Hxd3) (Desulfococcus oleovorans).